The sequence spans 281 residues: MKHPFSRFFSFGEKEQEETMEKQEKEEVRKIPVSKIVPNRFQPRTIFDEEKIEELALTIHTHGIIQPIVVRECEDGKFEIIAGERRWRAVQKLGWSEIPAIIKNLNDKETASVALIENLQREELTPIEEAMAYAKLLELHNLTQEALAQRLGKGQSTIANKLRLLKLPQEVQEALLHRTITERHARALIVLKDKEKQLKLLQEIIDKQLNVKQTEDRVLKMLEAANPKPKPKRKAFSKDMRIAVNTIRQSLTMVANSGVAVDSEEEEFEDYYQITIRIPKK.

The H-T-H motif DNA-binding region spans 145 to 164; the sequence is EALAQRLGKGQSTIANKLRL.

The protein belongs to the ParB family.

The protein localises to the cytoplasm. The protein resides in the nucleoid. In terms of biological role, effects nucleoid occlusion by binding relatively nonspecifically to DNA and preventing the assembly of the division machinery in the vicinity of the nucleoid, especially under conditions that disturb the cell cycle. It helps to coordinate cell division and chromosome segregation by preventing the formation of the Z ring through the nucleoid, which would cause chromosome breakage. The protein is Nucleoid occlusion protein of Geobacillus sp. (strain WCH70).